A 312-amino-acid polypeptide reads, in one-letter code: Malate dehydrogenase (312 aa).

NAD(+) contacts are provided by residues 7 to 13 (GAAGGIG) and Asp-34. Substrate-binding residues include Arg-81 and Arg-87. NAD(+) is bound by residues Asn-94 and 117–119 (ITN). Positions 119 and 153 each coordinate substrate. His-177 serves as the catalytic Proton acceptor. Residue Met-227 participates in NAD(+) binding.

This sequence belongs to the LDH/MDH superfamily. MDH type 1 family. As to quaternary structure, homodimer.

It carries out the reaction (S)-malate + NAD(+) = oxaloacetate + NADH + H(+). Catalyzes the reversible oxidation of malate to oxaloacetate. This chain is Malate dehydrogenase, found in Escherichia coli O7:K1 (strain IAI39 / ExPEC).